The chain runs to 86 residues: RNA-binding protein Hfq (86 aa).

Residues 10–71 (DLFLNNARKE…VSTIQPGKYI (62 aa)) form the Sm domain.

This sequence belongs to the Hfq family. In terms of assembly, homohexamer.

Its function is as follows. RNA chaperone that binds small regulatory RNA (sRNAs) and mRNAs to facilitate mRNA translational regulation in response to envelope stress, environmental stress and changes in metabolite concentrations. Also binds with high specificity to tRNAs. This Clostridioides difficile (strain 630) (Peptoclostridium difficile) protein is RNA-binding protein Hfq.